We begin with the raw amino-acid sequence, 82 residues long: UPF0180 protein BC_1394 (82 aa).

It belongs to the UPF0180 family.

This Bacillus cereus (strain ATCC 14579 / DSM 31 / CCUG 7414 / JCM 2152 / NBRC 15305 / NCIMB 9373 / NCTC 2599 / NRRL B-3711) protein is UPF0180 protein BC_1394.